Reading from the N-terminus, the 1247-residue chain is DNA-directed RNA polymerase subunit beta (1247 aa).

Belongs to the RNA polymerase beta chain family. In plastids the minimal PEP RNA polymerase catalytic core is composed of four subunits: alpha, beta, beta', and beta''. When a (nuclear-encoded) sigma factor is associated with the core the holoenzyme is formed, which can initiate transcription.

The protein resides in the plastid. It carries out the reaction RNA(n) + a ribonucleoside 5'-triphosphate = RNA(n+1) + diphosphate. In terms of biological role, DNA-dependent RNA polymerase catalyzes the transcription of DNA into RNA using the four ribonucleoside triphosphates as substrates. The chain is DNA-directed RNA polymerase subunit beta (rpoB) from Helicosporidium sp. subsp. Simulium jonesii (Green alga).